A 578-amino-acid polypeptide reads, in one-letter code: Triokinase/FMN cyclase (578 aa).

In terms of domain architecture, DhaK spans 9–336; it reads SVEGCAGDAL…IDAETNAKAW (328 aa). Residues 56 to 59, Lys109, and Asp114 contribute to the dihydroxyacetone site; that span reads GSGH. His221 (tele-hemiaminal-histidine intermediate) is an active-site residue. The DhaL domain maps to 372–571; it reads KQMTLVLDRI…AAAIFRAILE (200 aa). Residues 401–404, 446–447, Gly486, and 494–495 each bind ATP; these read DGDC, SS, and TM. Phosphoserine occurs at positions 511 and 545. 556–558 contacts ATP; that stretch reads DPG.

This sequence belongs to the dihydroxyacetone kinase (DAK) family. Homodimer. Interacts with IFIH1 (via the CARD domains), the interaction is inhibited by viral infection. Requires Mg(2+) as cofactor. Mn(2+) is required as a cofactor. It depends on Co(2+) as a cofactor.

The enzyme catalyses dihydroxyacetone + ATP = dihydroxyacetone phosphate + ADP + H(+). The catalysed reaction is D-glyceraldehyde + ATP = D-glyceraldehyde 3-phosphate + ADP + H(+). It carries out the reaction FAD = riboflavin cyclic-4',5'-phosphate + AMP + H(+). Each activity is inhibited by the substrate(s) of the other. Its function is as follows. Catalyzes both the phosphorylation of dihydroxyacetone and of glyceraldehyde, and the splitting of ribonucleoside diphosphate-X compounds among which FAD is the best substrate. Represses IFIH1-mediated cellular antiviral response. In Rattus norvegicus (Rat), this protein is Triokinase/FMN cyclase (Tkfc).